The following is a 434-amino-acid chain: Eukaryotic translation initiation factor 3 subunit E-2 (434 aa).

The region spanning Phe219 to Leu392 is the PCI domain.

It belongs to the eIF-3 subunit E family. Component of the eukaryotic translation initiation factor 3 (eIF-3) complex. The eIF-3 complex interacts with pix. Interacts with mxt.

Its subcellular location is the cytoplasm. Its function is as follows. Component of the eukaryotic translation initiation factor 3 (eIF-3) complex, which is involved in protein synthesis of a specialized repertoire of mRNAs and, together with other initiation factors, stimulates binding of mRNA and methionyl-tRNAi to the 40S ribosome. The eIF-3 complex specifically targets and initiates translation of a subset of mRNAs involved in cell proliferation. The chain is Eukaryotic translation initiation factor 3 subunit E-2 (eIF3-S6-2) from Drosophila willistoni (Fruit fly).